The chain runs to 247 residues: ATP synthase subunit a (247 aa).

6 helical membrane passes run 24–44 (IAFTNSSAYMLVAVVLTSLLM), 82–102 (FFPFVFTIFMLVTVSNLVGIV), 112–132 (IIVTAALAFLVFFTVLIYGFY), 141–161 (LFVPSGIPIVILPLVVAIEVI), 194–214 (MLGAMGIVGVFGAVLPLALVV), and 219–239 (LELLVAFLQAYVFTILTCIYI).

It belongs to the ATPase A chain family. F-type ATPases have 2 components, CF(1) - the catalytic core - and CF(0) - the membrane proton channel. CF(1) has five subunits: alpha(3), beta(3), gamma(1), delta(1), epsilon(1). CF(0) has three main subunits: a(1), b(2) and c(9-12). The alpha and beta chains form an alternating ring which encloses part of the gamma chain. CF(1) is attached to CF(0) by a central stalk formed by the gamma and epsilon chains, while a peripheral stalk is formed by the delta and b chains.

It localises to the cell inner membrane. Functionally, key component of the proton channel; it plays a direct role in the translocation of protons across the membrane. In Nitrobacter hamburgensis (strain DSM 10229 / NCIMB 13809 / X14), this protein is ATP synthase subunit a.